We begin with the raw amino-acid sequence, 467 residues long: Asparagine--tRNA ligase (467 aa).

Belongs to the class-II aminoacyl-tRNA synthetase family. In terms of assembly, homodimer.

The protein localises to the cytoplasm. The catalysed reaction is tRNA(Asn) + L-asparagine + ATP = L-asparaginyl-tRNA(Asn) + AMP + diphosphate + H(+). In Actinobacillus pleuropneumoniae serotype 3 (strain JL03), this protein is Asparagine--tRNA ligase.